A 147-amino-acid chain; its full sequence is Bis(5'-nucleosyl)-tetraphosphatase [asymmetrical] (147 aa).

Alanine 2 is subject to N-acetylalanine. The Nudix hydrolase domain maps to 2-139; the sequence is ALRACGLIIF…DMKAVLQEGH (138 aa). Positions 43 to 64 match the Nudix box motif; the sequence is GHVEPGESDLQTALRETQEEAG.

The protein belongs to the Nudix hydrolase family. A divalent metal cation is required as a cofactor.

It catalyses the reaction P(1),P(4)-bis(5'-guanosyl) tetraphosphate + H2O = GMP + GTP + 2 H(+). The enzyme catalyses a 5'-end CoA-ribonucleoside in mRNA + H2O = a 5'-end phospho-adenosine-phospho-ribonucleoside in mRNA + (R)-4'-phosphopantetheine + 2 H(+). The catalysed reaction is a 5'-end FAD-phospho-ribonucleoside in mRNA + H2O = a 5'-end phospho-adenosine-phospho-ribonucleoside in mRNA + FMN + 2 H(+). Inhibited by fluoride ions. Functionally, catalyzes the asymmetric hydrolysis of diadenosine 5',5'''-P1,P4-tetraphosphate (Ap4A) to yield AMP and ATP. Exhibits decapping activity towards FAD-capped RNAs and dpCoA-capped RNAs in vitro. In Sus scrofa (Pig), this protein is Bis(5'-nucleosyl)-tetraphosphatase [asymmetrical] (NUDT2).